Here is a 502-residue protein sequence, read N- to C-terminus: Glycerol kinase (502 aa).

Thr15 contacts ADP. Residues Thr15, Thr16, and Ser17 each contribute to the ATP site. Thr15 provides a ligand contact to sn-glycerol 3-phosphate. An ADP-binding site is contributed by Arg19. Sn-glycerol 3-phosphate is bound by residues Arg85, Glu86, and Tyr137. Positions 85, 86, and 137 each coordinate glycerol. Phosphohistidine; by HPr is present on His233. Asp247 lines the sn-glycerol 3-phosphate pocket. 2 residues coordinate glycerol: Asp247 and Gln248. The ADP site is built by Thr269 and Gly312. Residues Thr269, Gly312, Gln316, and Gly413 each contribute to the ATP site. 2 residues coordinate ADP: Gly413 and Asn417.

The protein belongs to the FGGY kinase family. As to quaternary structure, homotetramer and homodimer (in equilibrium). In terms of processing, the phosphoenolpyruvate-dependent sugar phosphotransferase system (PTS), including enzyme I, and histidine-containing protein (HPr) are required for the phosphorylation, which leads to the activation of the enzyme.

The catalysed reaction is glycerol + ATP = sn-glycerol 3-phosphate + ADP + H(+). The protein operates within polyol metabolism; glycerol degradation via glycerol kinase pathway; sn-glycerol 3-phosphate from glycerol: step 1/1. With respect to regulation, activated by phosphorylation and inhibited by fructose 1,6-bisphosphate (FBP). Key enzyme in the regulation of glycerol uptake and metabolism. Catalyzes the phosphorylation of glycerol to yield sn-glycerol 3-phosphate. The sequence is that of Glycerol kinase from Streptococcus agalactiae serotype Ia (strain ATCC 27591 / A909 / CDC SS700).